A 154-amino-acid polypeptide reads, in one-letter code: 6,7-dimethyl-8-ribityllumazine synthase (154 aa).

5-amino-6-(D-ribitylamino)uracil contacts are provided by residues Trp22, Ala56 to Glu58, and Cys80 to Ile82. Asp85 to Thr86 is a (2S)-2-hydroxy-3-oxobutyl phosphate binding site. Catalysis depends on His88, which acts as the Proton donor. A 5-amino-6-(D-ribitylamino)uracil-binding site is contributed by Asn113. Arg127 contributes to the (2S)-2-hydroxy-3-oxobutyl phosphate binding site.

Belongs to the DMRL synthase family. As to quaternary structure, forms an icosahedral capsid composed of 60 subunits, arranged as a dodecamer of pentamers.

The catalysed reaction is (2S)-2-hydroxy-3-oxobutyl phosphate + 5-amino-6-(D-ribitylamino)uracil = 6,7-dimethyl-8-(1-D-ribityl)lumazine + phosphate + 2 H2O + H(+). Its pathway is cofactor biosynthesis; riboflavin biosynthesis; riboflavin from 2-hydroxy-3-oxobutyl phosphate and 5-amino-6-(D-ribitylamino)uracil: step 1/2. Catalyzes the formation of 6,7-dimethyl-8-ribityllumazine by condensation of 5-amino-6-(D-ribitylamino)uracil with 3,4-dihydroxy-2-butanone 4-phosphate. This is the penultimate step in the biosynthesis of riboflavin. This chain is 6,7-dimethyl-8-ribityllumazine synthase, found in Xanthomonas campestris pv. campestris (strain 8004).